The chain runs to 380 residues: Transmembrane protein 229A (380 aa).

The segment at 1–40 (MAGSDVDSEGPARRGGAARRPGAPGGPGSEAAAGCPEPLS) is disordered. 2 consecutive transmembrane segments (helical) span residues 51 to 71 (LPAW…DVLV) and 117 to 137 (AFVF…TLAG). The interval 188–236 (RQQQQQQQQQQQQRRGALPVPPGARVPTAAGARRRRPRGPRGAGGAPSQ) is disordered. Positions 190–202 (QQQQQQQQQQQRR) are enriched in low complexity. 4 helical membrane-spanning segments follow: residues 244-264 (FLFF…FFNV), 278-298 (LWSF…YFHL), 310-330 (VPIY…GLRT), and 343-363 (LNFM…LSVY).

Belongs to the TMEM229 family.

The protein resides in the membrane. The protein is Transmembrane protein 229A (TMEM229A) of Homo sapiens (Human).